Here is a 454-residue protein sequence, read N- to C-terminus: Cholesterol 7-desaturase nvd (454 aa).

The next 2 helical transmembrane spans lie at 13-33 (VLCP…LGAG) and 47-67 (TTLS…LWGW). A Rieske domain is found at 117-221 (WYRALDSHLL…SCELNGMVFV (105 aa)). 4 residues coordinate [2Fe-2S] cluster: Cys-158, His-160, Cys-178, and His-181.

It belongs to the cholesterol 7-desaturase family. [2Fe-2S] cluster is required as a cofactor.

Its subcellular location is the membrane. It carries out the reaction cholesterol + NADPH + O2 + H(+) = 7-dehydrocholesterol + NADP(+) + 2 H2O. The catalysed reaction is cholesterol + NADH + O2 + H(+) = 7-dehydrocholesterol + NAD(+) + 2 H2O. It participates in steroid hormone biosynthesis; dafachronic acid biosynthesis. Its function is as follows. Catalyzes the production of 7-dehydrocholesterol (7-DHC or cholesta-5,7-dien-3beta-ol) by inserting a double bond (desaturating) at the C7-C8 single bond of cholesterol. This reaction is the first step in the synthesis of the steroid hormone Delta(7)-dafachronic acid. The sequence is that of Cholesterol 7-desaturase nvd (nvd) from Xenopus laevis (African clawed frog).